Consider the following 469-residue polypeptide: Phosphatidylinositol 4-kinase type 2-alpha (469 aa).

2 disordered regions span residues 1–30 and 50–72; these read MDET…ATVP and TATS…DQER. The segment covering 16–25 has biased composition (polar residues); the sequence is EYSYQSQCSP. The span at 50–60 shows a compositional bias: low complexity; sequence TATSCGSAASG. The PI3K/PI4K catalytic domain occupies 115-443; the sequence is DILPERISQG…VQTPPVIVET (329 aa). A G-loop region spans residues 121–127; the sequence is ISQGSSG. ATP contacts are provided by residues 122–128 and Lys143; that span reads SQGSSGS. The segment at 148–150 is important for substrate binding; it reads EPY. Positions 156–169 are important for interaction with membranes; sequence KWTKWLQKLCCPCC. Residues Cys165, Cys166, Cys168, and Cys169 are each lipidated (S-palmitoyl cysteine). An ATP-binding site is contributed by 252–255; it reads QIFV. Positions 259–267 are important for interaction with membranes; sequence KDADYWLRR. Residues 296 to 304 are catalytic loop; that stretch reads RNTDRGNDN. The interval 334–354 is activation loop; that stretch reads AIDNGLAFPLKHPDSWRAYPF. Position 336 (Asp336) interacts with ATP. An important for interaction with membranes region spans residues 349 to 358; sequence WRAYPFYWAW.

The protein belongs to the PI3/PI4-kinase family. Type II PI4K subfamily.

The protein resides in the golgi apparatus. The protein localises to the trans-Golgi network membrane. Its subcellular location is the membrane raft. It is found in the endosome. It localises to the endosome membrane. The protein resides in the cytoplasmic vesicle. The protein localises to the cell projection. Its subcellular location is the dendrite. It is found in the presynaptic cell membrane. It localises to the synapse. The protein resides in the synaptosome. The protein localises to the mitochondrion. Its subcellular location is the membrane. It is found in the cell membrane. It localises to the perikaryon. The protein resides in the neuron projection. The enzyme catalyses a 1,2-diacyl-sn-glycero-3-phospho-(1D-myo-inositol) + ATP = a 1,2-diacyl-sn-glycero-3-phospho-(1D-myo-inositol 4-phosphate) + ADP + H(+). Membrane-bound phosphatidylinositol-4 kinase (PI4-kinase) that catalyzes the phosphorylation of phosphatidylinositol (PI) to phosphatidylinositol 4-phosphate (PI4P), a lipid that plays important roles in endocytosis, Golgi function, protein sorting and membrane trafficking. Besides, phosphorylation of phosphatidylinositol (PI) to phosphatidylinositol 4-phosphate (PI4P) is the first committed step in the generation of phosphatidylinositol 4,5-bisphosphate (PIP2), a precursor of the second messenger inositol 1,4,5-trisphosphate (InsP3). The sequence is that of Phosphatidylinositol 4-kinase type 2-alpha (pi4k2a) from Xenopus laevis (African clawed frog).